The following is a 400-amino-acid chain: Na(+)/H(+) antiporter NhaA 1 (400 aa).

Transmembrane regions (helical) follow at residues 25–45 (IVLMFCAIIAIIIANSNFSSM), 67–87 (ILHWINDGLMAIFFLVVGMEI), 103–123 (ILPVSAAIGGMVVPAIIYALF), 130–150 (IIGWGIPMATDIAFALGILSL), 159–179 (IIIFLTALAIVDDLGAIIVIA), 184–204 (SEISWIALILGLIIFLAIILA), 213–233 (WLYIIFGIALWICFLKSGVHE), 264–284 (VLTPLSSFIIMPIFALANSGI), 303–323 (IIFGLFIGKQIGIFGASYILV), 339–359 (LYGASVLGGIGFTMSLFVSSL), and 372–392 (ISIIIASILSAAFGAAIFKII).

The protein belongs to the NhaA Na(+)/H(+) (TC 2.A.33) antiporter family.

Its subcellular location is the cell membrane. It catalyses the reaction Na(+)(in) + 2 H(+)(out) = Na(+)(out) + 2 H(+)(in). In terms of biological role, na(+)/H(+) antiporter that extrudes sodium in exchange for external protons. This chain is Na(+)/H(+) antiporter NhaA 1, found in Clostridium beijerinckii (strain ATCC 51743 / NCIMB 8052) (Clostridium acetobutylicum).